A 236-amino-acid chain; its full sequence is DNA repair protein RecO (236 aa).

Belongs to the RecO family.

Involved in DNA repair and RecF pathway recombination. The polypeptide is DNA repair protein RecO (Haemophilus influenzae (strain PittGG)).